We begin with the raw amino-acid sequence, 32 residues long: Ranatuerin-2BYa (32 aa).

A disulfide bridge connects residues Cys27 and Cys32.

Expressed by the skin glands.

It is found in the secreted. Antibacterial activity against Gram-positive bacterium S.aureus and Gram-negative bacterium E.coli. Weak hemolytic activity. In Rana boylii (Foothill yellow-legged frog), this protein is Ranatuerin-2BYa.